The primary structure comprises 326 residues: MNQWHYGRYSRGRDFTARAPPKKKGKNQIPERWKDYLPVGQRMPGTRFIAFKVPLQKKFEAKLMPEECFSPLDLFNKIQEQNEELGLIIDLTYTQRYYKVEDLPKTISYIKILTVGHQVPDSGTIFQFKSAVKEFLKRNKNNDKLIGVHCTHGLNRTGYLICRYLIDVEGMRPDDAIELFNRCRGHCIERQNYIENLQKRRVRKNQNASASRSGGLEDSAHLTEQVHTTNKPVNKGPKKSRRGGHLESSQHVQTQSSAYSFRKWSQNQSVYQRGFVPPPGPAGEDYSQRRFFWSMRPNGSQATHHKKWIAASYQRPFYPASWEWNV.

Positions 1-28 (MNQWHYGRYSRGRDFTARAPPKKKGKNQ) are disordered. The Tyrosine-protein phosphatase domain maps to 59 to 206 (FEAKLMPEEC…LQKRRVRKNQ (148 aa)). Cys-150 functions as the Phosphocysteine intermediate in the catalytic mechanism. 151–156 (THGLNR) contacts substrate. Arg-156 acts as the Proton donor/acceptor in catalysis. The tract at residues 200 to 258 (RRVRKNQNASASRSGGLEDSAHLTEQVHTTNKPVNKGPKKSRRGGHLESSQHVQTQSSA) is disordered. Polar residues predominate over residues 247–258 (ESSQHVQTQSSA).

The protein belongs to the protein-tyrosine phosphatase family. Non-receptor class dual specificity subfamily. In terms of assembly, monomer. May interact with SFRS7 and SFRS9/SRP30C.

The protein resides in the nucleus. The protein localises to the nucleus speckle. Functionally, possesses RNA 5'-triphosphatase and diphosphatase activities, but displays a poor protein-tyrosine phosphatase activity. In addition, has phosphatase activity with ATP, ADP and O-methylfluorescein phosphate (in vitro). Binds to RNA. May participate in nuclear mRNA metabolism. This is RNA/RNP complex-1-interacting phosphatase (Dusp11) from Rattus norvegicus (Rat).